A 226-amino-acid chain; its full sequence is Small ribosomal subunit protein uS3 (226 aa).

The KH type-2 domain maps to 39–107; the sequence is IRKFIKNKLY…NILINITEIK (69 aa).

Belongs to the universal ribosomal protein uS3 family. Part of the 30S ribosomal subunit. Forms a tight complex with proteins S10 and S14.

In terms of biological role, binds the lower part of the 30S subunit head. Binds mRNA in the 70S ribosome, positioning it for translation. This is Small ribosomal subunit protein uS3 from Acetivibrio thermocellus (strain ATCC 27405 / DSM 1237 / JCM 9322 / NBRC 103400 / NCIMB 10682 / NRRL B-4536 / VPI 7372) (Clostridium thermocellum).